The following is a 148-amino-acid chain: Putative nickel-responsive regulator (148 aa).

Residues His-76, His-87, His-89, and Cys-95 each contribute to the Ni(2+) site.

Belongs to the transcriptional regulatory CopG/NikR family. Requires Ni(2+) as cofactor.

In terms of biological role, transcriptional regulator. The sequence is that of Putative nickel-responsive regulator from Rhodopseudomonas palustris (strain ATCC BAA-98 / CGA009).